Here is a 254-residue protein sequence, read N- to C-terminus: Coproheme decarboxylase (254 aa).

Residues Arg-136, 150–154, His-177, Gln-190, and Ser-228 contribute to the Fe-coproporphyrin III site; that span reads YPMDK. Residue Tyr-150 is part of the active site.

The protein belongs to the ChdC family. Type 1 subfamily. Requires Fe-coproporphyrin III as cofactor.

It catalyses the reaction Fe-coproporphyrin III + 2 H2O2 + 2 H(+) = heme b + 2 CO2 + 4 H2O. It carries out the reaction Fe-coproporphyrin III + H2O2 + H(+) = harderoheme III + CO2 + 2 H2O. The enzyme catalyses harderoheme III + H2O2 + H(+) = heme b + CO2 + 2 H2O. It participates in porphyrin-containing compound metabolism; protoheme biosynthesis. In terms of biological role, involved in coproporphyrin-dependent heme b biosynthesis. Catalyzes the decarboxylation of Fe-coproporphyrin III (coproheme) to heme b (protoheme IX), the last step of the pathway. The reaction occurs in a stepwise manner with a three-propionate intermediate. In Bacillus licheniformis (strain ATCC 14580 / DSM 13 / JCM 2505 / CCUG 7422 / NBRC 12200 / NCIMB 9375 / NCTC 10341 / NRRL NRS-1264 / Gibson 46), this protein is Coproheme decarboxylase.